Reading from the N-terminus, the 260-residue chain is Pectate lyase H (260 aa).

Residues 1 to 17 (MFIKNGLLLSLATSVLA) form the signal peptide.

Belongs to the polysaccharide lyase 3 family. Ca(2+) serves as cofactor.

The protein localises to the secreted. The enzyme catalyses Eliminative cleavage of (1-&gt;4)-alpha-D-galacturonan to give oligosaccharides with 4-deoxy-alpha-D-galact-4-enuronosyl groups at their non-reducing ends.. Pectinolytic enzyme consist of four classes of enzymes: pectin lyase, polygalacturonase, pectin methylesterase and rhamnogalacturonase. Among pectinolytic enzymes, pectin lyase is the most important in depolymerization of pectin, since it cleaves internal glycosidic bonds of highly methylated pectins. Favors pectate, the anion, over pectin, the methyl ester. In Emericella nidulans (strain FGSC A4 / ATCC 38163 / CBS 112.46 / NRRL 194 / M139) (Aspergillus nidulans), this protein is Pectate lyase H (plyH).